Here is a 369-residue protein sequence, read N- to C-terminus: Glycolate oxidase 1 (369 aa).

The 360-residue stretch at 1–360 (MGEITNVMEY…TRAHIYTDAD (360 aa)) folds into the FMN hydroxy acid dehydrogenase domain. Tyr25 contributes to the glyoxylate binding site. Residues 78 to 80 (PSA), Ser107, 128 to 130 (QLY), and Thr156 each bind FMN. Glyoxylate is bound at residue Tyr130. Arg165 provides a ligand contact to glyoxylate. Lys231 and Ser253 together coordinate FMN. 2 residues coordinate glyoxylate: His255 and Arg258. His255 (proton acceptor) is an active-site residue. FMN-binding positions include 286–290 (DGGVR) and 309–310 (GR). Residues 367-369 (PRL) carry the Microbody targeting signal motif.

This sequence belongs to the FMN-dependent alpha-hydroxy acid dehydrogenase family. In terms of assembly, homotetramer. Interacts with rice dwarf virus (RDV) P8. This interaction promotes viral P8 relocation to virus factories peripheral to peroxisomes. It depends on FMN as a cofactor.

Its subcellular location is the peroxisome. It carries out the reaction glycolate + O2 = glyoxylate + H2O2. The protein operates within photosynthesis; photorespiration; glycine from 2-phosphoglycolate: step 2/3. Functionally, catalyzes the oxidation of glycolate to glyoxylate, with a reduction of O2 to H2O2. Is a key enzyme in photorespiration in plants. Can exert a strong regulation over photosynthesis, possibly through a feed-back inhibition on Rubisco activase. Does not seem to play a role in oxalate accumulation. This is Glycolate oxidase 1 (GLO1) from Oryza sativa subsp. indica (Rice).